The chain runs to 600 residues: Protein GPR107 (600 aa).

The N-terminal stretch at 1–39 (MAALAPVGSPASRGPRLAAGLRLLPMLGLLQLLAEPGLG) is a signal peptide. Topologically, residues 40 to 263 (RVHHLALKDD…YLSAGEIPLP (224 aa)) are extracellular. Residues N70 and N169 are each glycosylated (N-linked (GlcNAc...) asparagine). The cysteines at positions 109 and 228 are disulfide-linked. Positions 157 to 175 (SQEPNVNPASAGNQTQKTQ) are enriched in polar residues. Positions 157-185 (SQEPNVNPASAGNQTQKTQDGGKSKRSTV) are disordered. Basic and acidic residues predominate over residues 176–185 (DGGKSKRSTV). A glycan (N-linked (GlcNAc...) asparagine) is linked at N211. The helical transmembrane segment at 264–284 (KLYISMAFFFFLSGTIWIHIL) threads the bilayer. The Cytoplasmic segment spans residues 285–293 (RKRRNDVFK). The helical transmembrane segment at 294–314 (IHWLMAALPFTKSLSLVFHAI) threads the bilayer. Residues 315 to 337 (DYHYISSQGFPIEGWAVVYYITH) are Extracellular-facing. Residues 338–358 (LLKGALLFITIALIGTGWAFI) form a helical membrane-spanning segment. Residues 359-368 (KHILSDKDKK) are Cytoplasmic-facing. Residues 369 to 389 (IFMIVIPLQVLANVAYIIIES) traverse the membrane as a helical segment. Topologically, residues 390 to 402 (TEEGTTEYGLWKD) are extracellular. Residues 403 to 423 (SLFLVDLLCCGAILFPVVWSI) form a helical membrane-spanning segment. At 424–498 (RHLQEASATD…AKLKLFRHYY (75 aa)) the chain is on the cytoplasmic side. Residues 499 to 519 (VLIVCYIYFTRIIAFLLKLAV) traverse the membrane as a helical segment. Topologically, residues 520–524 (PFQWK) are extracellular. The helical transmembrane segment at 525-544 (WLYQLLDETATLVFFVLTGY) threads the bilayer. At 545 to 600 (KFRPASDNPYLQLSQEEEDLEMESVVTTSGVMESMKKVKKVTNGSVEPQGEWEGAV) the chain is on the cytoplasmic side.

Belongs to the LU7TM family. Post-translationally, cleaved by FURIN to yield two fragments of 17 and 35 kDa that remain associated via a disulfide bond.

It is found in the cell membrane. It localises to the golgi apparatus. The protein resides in the trans-Golgi network membrane. Functionally, has been proposed to act as a receptor for neuronostatin, a peptide derived from the somatostatin/SST precursor. Involved in blood sugar regulation through the induction of glucagon in response to low glucose. Its function is as follows. (Microbial infection) Required for intoxication by Pseudomonas aeruginosa exotoxin A and Campylobacter jejuni CDT. May contribute to the retrograde transport of bacterial toxins, including cholera toxin, from the trans-Golgi network to the endoplasmic reticulum. This chain is Protein GPR107 (GPR107), found in Homo sapiens (Human).